A 978-amino-acid polypeptide reads, in one-letter code: NACHT, LRR and PYD domains-containing protein 4E (978 aa).

Positions Met-1 to Gly-93 constitute a Pyrin domain. The NACHT domain maps to His-148 to His-471. Gly-154–Ser-161 lines the ATP pocket. 6 LRR repeats span residues Cys-594 to Thr-617, Leu-694 to Ala-717, Ser-746 to Pro-773, Asn-802 to Gly-825, Asn-859 to Asp-882, and Cys-916 to Ala-940.

Belongs to the NLRP family.

Its function is as follows. May be involved in inflammation and recognition of cytosolic pathogen-associated molecular patterns (PAMPs) not intercepted by membrane-bound receptors. The protein is NACHT, LRR and PYD domains-containing protein 4E (Nlrp4e) of Mus musculus (Mouse).